The primary structure comprises 146 residues: DNA-directed RNA polymerases II, IV and V subunit 8B (146 aa).

It belongs to the eukaryotic RPB8 RNA polymerase subunit family. As to quaternary structure, component of the RNA polymerase II, IV and V complexes. Associates with the mediator complex.

Its subcellular location is the nucleus. Functionally, DNA-dependent RNA polymerase catalyzes the transcription of DNA into RNA using the four ribonucleoside triphosphates as substrates. Component of RNA polymerase II which synthesizes mRNA precursors and many functional non-coding RNAs. Pol II is the central component of the basal RNA polymerase II transcription machinery. It is composed of mobile elements that move relative to each other. Component of RNA polymerases IV and V which mediate short-interfering RNAs (siRNA) accumulation and subsequent RNA-directed DNA methylation-dependent (RdDM) transcriptional gene silencing (TGS) of endogenous repeated sequences, including transposable elements. The protein is DNA-directed RNA polymerases II, IV and V subunit 8B (NRPB8B) of Arabidopsis thaliana (Mouse-ear cress).